A 483-amino-acid polypeptide reads, in one-letter code: Cysteine--tRNA ligase (483 aa).

C29 provides a ligand contact to Zn(2+). The short motif at P31–H41 is the 'HIGH' region element. 3 residues coordinate Zn(2+): C221, H246, and E250. A 'KMSKS' region motif is present at residues K278–S282. Position 281 (K281) interacts with ATP.

The protein belongs to the class-I aminoacyl-tRNA synthetase family. Monomer. Requires Zn(2+) as cofactor.

The protein localises to the cytoplasm. It carries out the reaction tRNA(Cys) + L-cysteine + ATP = L-cysteinyl-tRNA(Cys) + AMP + diphosphate. This is Cysteine--tRNA ligase from Chlorobium luteolum (strain DSM 273 / BCRC 81028 / 2530) (Pelodictyon luteolum).